Reading from the N-terminus, the 172-residue chain is C-phycocyanin beta chain (172 aa).

An N4-methylasparagine modification is found at asparagine 72. (2R,3E)-phycocyanobilin contacts are provided by cysteine 82 and cysteine 153.

Belongs to the phycobiliprotein family. As to quaternary structure, heterodimer of an alpha and a beta subunit, which further assembles into trimers and the trimers into hexamers. The basic functional unit of phycobiliproteins is a ring-shaped hexamer formed from two back-to-back trimers contacting via the alpha chain subunits. The trimers are composed of alpha/beta subunit heterodimers arranged around a three-fold axis of symmetry. The phycoerythrins also contain a gamma subunit which is located in the center of the hexamer. Contains two covalently linked bilin chromophores.

Its subcellular location is the plastid. The protein resides in the chloroplast thylakoid membrane. Light-harvesting photosynthetic bile pigment-protein from the phycobiliprotein complex (phycobilisome, PBS). Phycocyanin is the major phycobiliprotein in the PBS rod. The protein is C-phycocyanin beta chain (cpcB) of Rhodella violacea (Red alga).